Consider the following 202-residue polypeptide: Glycerol-3-phosphate acyltransferase (202 aa).

A run of 6 helical transmembrane segments spans residues Ile-2–Val-22, Lys-51–Ala-71, Val-80–Leu-100, Ile-116–Ala-136, Phe-137–Tyr-157, and Val-158–Ile-178.

It belongs to the PlsY family. As to quaternary structure, probably interacts with PlsX.

It is found in the cell inner membrane. It catalyses the reaction an acyl phosphate + sn-glycerol 3-phosphate = a 1-acyl-sn-glycero-3-phosphate + phosphate. It participates in lipid metabolism; phospholipid metabolism. Its function is as follows. Catalyzes the transfer of an acyl group from acyl-phosphate (acyl-PO(4)) to glycerol-3-phosphate (G3P) to form lysophosphatidic acid (LPA). This enzyme utilizes acyl-phosphate as fatty acyl donor, but not acyl-CoA or acyl-ACP. The protein is Glycerol-3-phosphate acyltransferase of Cupriavidus metallidurans (strain ATCC 43123 / DSM 2839 / NBRC 102507 / CH34) (Ralstonia metallidurans).